Here is a 384-residue protein sequence, read N- to C-terminus: Beta-glucuronosyltransferase GlcAT14C (384 aa).

At 1 to 11 (MKRSHISSPRS) the chain is on the cytoplasmic side. The signal-anchor for type II membrane protein transmembrane segment at 12 to 34 (YSRPAISIFGVFLLFLLVLTLSS) threads the bilayer. The Lumenal segment spans residues 35-384 (RKPSDSSSGL…HENFRAKQCK (350 aa)). N-linked (GlcNAc...) asparagine glycans are attached at residues Asn-156, Asn-285, and Asn-306.

This sequence belongs to the glycosyltransferase 14 family.

It localises to the golgi apparatus membrane. Its function is as follows. Beta-glucuronosyltransferase involved in the biosynthesis of type II arabinogalactan (AG). Modifies both the beta-1,6-linked galactan and beta-1,3-linked galactan present in type II AG. The chain is Beta-glucuronosyltransferase GlcAT14C from Arabidopsis thaliana (Mouse-ear cress).